The sequence spans 347 residues: MDITVAIDAMGGDHGPHVTIPAALNAIRQDSQLNIILVGVKDVIEAELSANKATVGPRLRIHHATEVVAMDESPQSALKNKKDSSMRVAINLVKSGEATACVSAGNTGALMATARFVLKTLPGIDRPAIAGILPTQKGRVYMLDLGANADCTPEHLLQFAIMGAMLVSCVEHKERPSVGLLNIGSEDIKGNEVVKQAGELLRASRLNFYGNIEGNDIYKGTTDVVVCDGFVGNVALKTSEGLAQMVNRFLVQEFKRSWMTKLMALISMPVLKAFKRRLDPRRYNGATFLGLRGVVVKSHGGADSLAFQYAIQAAAEESRNGVLNRITEQLEIEHLKPQPAAQGVENI.

This sequence belongs to the PlsX family. In terms of assembly, homodimer. Probably interacts with PlsY.

It is found in the cytoplasm. The catalysed reaction is a fatty acyl-[ACP] + phosphate = an acyl phosphate + holo-[ACP]. The protein operates within lipid metabolism; phospholipid metabolism. Catalyzes the reversible formation of acyl-phosphate (acyl-PO(4)) from acyl-[acyl-carrier-protein] (acyl-ACP). This enzyme utilizes acyl-ACP as fatty acyl donor, but not acyl-CoA. This chain is Phosphate acyltransferase, found in Methylobacillus flagellatus (strain ATCC 51484 / DSM 6875 / VKM B-1610 / KT).